We begin with the raw amino-acid sequence, 505 residues long: Histidine ammonia-lyase (505 aa).

Residues 141–143 constitute a cross-link (5-imidazolinone (Ala-Gly)); the sequence is ASG. Ser-142 is subject to 2,3-didehydroalanine (Ser).

Belongs to the PAL/histidase family. Contains an active site 4-methylidene-imidazol-5-one (MIO), which is formed autocatalytically by cyclization and dehydration of residues Ala-Ser-Gly.

Its subcellular location is the cytoplasm. It catalyses the reaction L-histidine = trans-urocanate + NH4(+). Its pathway is amino-acid degradation; L-histidine degradation into L-glutamate; N-formimidoyl-L-glutamate from L-histidine: step 1/3. This is Histidine ammonia-lyase from Bacillus anthracis.